The primary structure comprises 322 residues: Ferric-anguibactin-binding protein FatB (322 aa).

Residues 1–22 (MFKSTLNIAVAIVCSSLVTLTG) form the signal peptide. Cys23 carries the N-palmitoyl cysteine lipid modification. Residue Cys23 is the site of S-diacylglycerol cysteine attachment. The 266-residue stretch at 57–322 (RVAALDMNEV…IDDIIKGYQS (266 aa)) folds into the Fe/B12 periplasmic-binding domain.

This sequence belongs to the bacterial solute-binding protein 8 family. As to quaternary structure, part of an iron transport system composed of the outer membrane receptor FatA, the periplasmic binding protein FatB and the inner membrane proteins FatC and FatD.

It localises to the cell inner membrane. Functionally, involved in the uptake of iron in complex with the siderophore anguibactin. Binds ferric-anguibactin in the periplasm and mediates its transport into the cytoplasm. This Vibrio anguillarum (strain ATCC 68554 / 775) (Listonella anguillarum) protein is Ferric-anguibactin-binding protein FatB.